Reading from the N-terminus, the 350-residue chain is Putative isomerase YbhH (350 aa).

It belongs to the PrpF family.

This is Putative isomerase YbhH (ybhH) from Escherichia coli O6:H1 (strain CFT073 / ATCC 700928 / UPEC).